A 189-amino-acid chain; its full sequence is ATP synthase subunit b (189 aa).

Residues 35–54 (LLAQMFNFLVLLILLRAVAY) form a helical membrane-spanning segment.

This sequence belongs to the ATPase B chain family. F-type ATPases have 2 components, F(1) - the catalytic core - and F(0) - the membrane proton channel. F(1) has five subunits: alpha(3), beta(3), gamma(1), delta(1), epsilon(1). F(0) has three main subunits: a(1), b(2) and c(10-14). The alpha and beta chains form an alternating ring which encloses part of the gamma chain. F(1) is attached to F(0) by a central stalk formed by the gamma and epsilon chains, while a peripheral stalk is formed by the delta and b chains.

The protein resides in the cell membrane. Its function is as follows. F(1)F(0) ATP synthase produces ATP from ADP in the presence of a proton or sodium gradient. F-type ATPases consist of two structural domains, F(1) containing the extramembraneous catalytic core and F(0) containing the membrane proton channel, linked together by a central stalk and a peripheral stalk. During catalysis, ATP synthesis in the catalytic domain of F(1) is coupled via a rotary mechanism of the central stalk subunits to proton translocation. In terms of biological role, component of the F(0) channel, it forms part of the peripheral stalk, linking F(1) to F(0). This is ATP synthase subunit b from Desulforamulus reducens (strain ATCC BAA-1160 / DSM 100696 / MI-1) (Desulfotomaculum reducens).